Here is a 692-residue protein sequence, read N- to C-terminus: Highly divergent homeobox (692 aa).

A DNA-binding region (homeobox 1) is located at residues 3-63; sequence LRSVFTVEQQ…NKRRKMSSKS (61 aa). A compositionally biased stretch (polar residues) spans 117–133; that stretch reads SSSSKQGTTKHTNTQIT. Positions 117 to 136 are disordered; the sequence is SSSSKQGTTKHTNTQITEAH. Glycyl lysine isopeptide (Lys-Gly) (interchain with G-Cter in SUMO2) cross-links involve residues Lys-137, Lys-142, Lys-146, Lys-165, Lys-174, Lys-196, Lys-214, Lys-223, and Lys-234. Positions 437–500 form a DNA-binding region, homeobox 2; the sequence is ALQDRTQFSD…NRRRKYRLMG (64 aa). 2 disordered regions span residues 505–541 and 647–692; these read PPRG…DNDR and KDQQ…SDSL. Residues 676–692 show a composition bias toward polar residues; sequence TSLSVSSLSEKNASDSL.

The protein localises to the nucleus. This chain is Highly divergent homeobox (Hdx), found in Mus musculus (Mouse).